The chain runs to 285 residues: Iodotyrosine deiodinase 1 (285 aa).

A helical transmembrane segment spans residues 1–21 (MFLLTPVLVAVVCILVVWVFK). Residues 96-100 (RRSVR) and 124-125 (SG) contribute to the FMN site. Residues A126, E153, Y157, and K178 each coordinate 3,5-diiodo-L-tyrosine. 3-iodo-L-tyrosine-binding residues include A126, E153, Y157, and K178. Residues 233–235 (TTT) and R275 contribute to the FMN site.

Belongs to the nitroreductase family. Homodimer. The cofactor is FMN.

It is found in the cell membrane. The protein localises to the cytoplasmic vesicle membrane. It catalyses the reaction 2 iodide + L-tyrosine + 2 NADP(+) = 3,5-diiodo-L-tyrosine + 2 NADPH + H(+). It carries out the reaction iodide + L-tyrosine + NADP(+) = 3-iodo-L-tyrosine + NADPH. The enzyme catalyses 3-iodo-L-tyrosine + iodide + NADP(+) = 3,5-diiodo-L-tyrosine + NADPH + H(+). The catalysed reaction is L-tyrosine + chloride + NADP(+) = 3-chloro-L-tyrosine + NADPH. It catalyses the reaction bromide + L-tyrosine + NADP(+) = 3-bromo-L-tyrosine + NADPH. Its function is as follows. Catalyzes the dehalogenation of halotyrosines such as 3-bromo-L-tyrosine, 3-chloro-L-tyrosine, 3-iodo-L-tyrosine and 3,5-diiodo-L-tyrosine. During thyroid hormone biosynthesis, facilitates iodide salvage by catalysing the oxidative NADPH-dependent deiodination of the halogenated by-products of thyroid hormone production, monoiodotyrosine (L-MIT) and diiodotyrosine (L-DIT). The scavanged iodide can then reenter the hormone-producing pathways. Acts more efficiently on 3-iodo-L-tyrosine than 3,5-diiodo-L-tyrosine. The protein is Iodotyrosine deiodinase 1 (Iyd) of Mus musculus (Mouse).